Consider the following 313-residue polypeptide: Acetaldehyde dehydrogenase (313 aa).

15–18 (SGNI) lines the NAD(+) pocket. C133 serves as the catalytic Acyl-thioester intermediate. Residues 164-172 (SAGPGTRAN) and N289 each bind NAD(+).

It belongs to the acetaldehyde dehydrogenase family.

It catalyses the reaction acetaldehyde + NAD(+) + CoA = acetyl-CoA + NADH + H(+). The chain is Acetaldehyde dehydrogenase from Rhizobium rhizogenes (strain K84 / ATCC BAA-868) (Agrobacterium radiobacter).